The following is a 695-amino-acid chain: Nicastrin (695 aa).

The N-terminal stretch at 1-22 is a signal peptide; the sequence is MEMRLNAASIWLLILSYGATIA. At 23 to 654 the chain is on the extracellular side; sequence QGERTRDKMY…IFLRPSNVHQ (632 aa). 9 N-linked (GlcNAc...) asparagine glycosylation sites follow: Asn-45, Asn-108, Asn-116, Asn-138, Asn-381, Asn-461, Asn-489, Asn-585, and Asn-609. The helical transmembrane segment at 655–675 threads the bilayer; sequence VTTLSVGIVVLIISFCLVYII. The Cytoplasmic segment spans residues 676-695; it reads SSRSEVLFEDLPASNAALFG.

Belongs to the nicastrin family. Component of the gamma-secretase complex, a complex composed of a presenilin (Psn) homodimer, nicastrin (Nct), Aph-1 and Pen-2.

Its subcellular location is the membrane. Essential subunit of the gamma-secretase complex, an endoprotease complex that catalyzes the intramembrane cleavage of integral membrane proteins such as Notch. It probably represents a stabilizing cofactor required for the assembly of the gamma-secretase complex. The polypeptide is Nicastrin (Drosophila melanogaster (Fruit fly)).